A 659-amino-acid chain; its full sequence is RNA polymerase II-associated protein 3 (659 aa).

Thr-2 bears the N-acetylthreonine mark. The stretch at 8–41 (VELQLQVKHNAEELQDFMRDLEHWEKTMRQKDLE) is one TPR 1 repeat. Positions 39–81 (DLELRRQSGVPEENLPPIRNGSFRKKKKRKTKDSSKKTKEENT) are disordered. A compositionally biased stretch (basic residues) spans 60–69 (SFRKKKKRKT). The segment covering 70 to 81 (KDSSKKTKEENT) has biased composition (basic and acidic residues). Ser-87, Ser-116, Ser-119, and Ser-121 each carry phosphoserine. A disordered region spans residues 107 to 128 (KEDSTHDSVSQESESDEDGVRV). TPR repeat units lie at residues 133-166 (ALVL…DPYN), 168-200 (VLPT…SRSY), 201-234 (TKAY…EPDN), 282-315 (AIAE…DSTN), 317-349 (LLPA…DGSY), and 350-383 (SKAF…EPGN). Residues 447 to 485 (DAPESSATVPESDRAAVAVDTGRKKDFSQGDSVSSGETP) form a disordered region. Ser-474 carries the phosphoserine modification. Lys-491 is covalently cross-linked (Glycyl lysine isopeptide (Lys-Gly) (interchain with G-Cter in SUMO2)).

The protein belongs to the RPAP3 family. In terms of assembly, tightly associated with the RNA polymerase II complex. Component of the R2TP complex composed at least of RUVBL1, RUVBL2, RPAP3 and PIHD1. Component of the PAQosome complex which is responsible for the biogenesis of several protein complexes and which consists of R2TP complex members RUVBL1, RUVBL2, RPAP3 and PIH1D1, URI complex members PFDN2, PFDN6, PDRG1, UXT and URI1 as well as ASDURF, POLR2E and DNAAF10/WDR92. Interacts with PIH1D1. Interacts with TSC1 and TSC2. Interacts with PRPF8 and EFTUD2 in a ZNHIT2-dependent manner.

Functionally, forms an interface between the RNA polymerase II enzyme and chaperone/scaffolding protein, suggesting that it is required to connect RNA polymerase II to regulators of protein complex formation. This Rattus norvegicus (Rat) protein is RNA polymerase II-associated protein 3 (Rpap3).